The following is a 525-amino-acid chain: NAD(P)H-quinone oxidoreductase chain 4-2 (525 aa).

A run of 14 helical transmembrane segments spans residues 6–26 (FPWL…IPII), 36–56 (WYAL…FYTS), 91–111 (LIIL…PVTL), 115–135 (LFYF…AVQD), 137–157 (LLFF…LAIW), 169–189 (FILY…TMAF), 212–232 (LLLY…IPLH), 243–263 (TAPA…YALI), 277–297 (FAPV…LTSF), 314–334 (MGFV…GAVL), 335–355 (QMVS…ATYD), 375–397 (IFAM…GFVA), 417–437 (VIVV…LLSM), and 464–484 (VFVI…PKLL).

Belongs to the complex I subunit 4 family.

The protein localises to the cellular thylakoid membrane. It carries out the reaction a plastoquinone + NADH + (n+1) H(+)(in) = a plastoquinol + NAD(+) + n H(+)(out). The catalysed reaction is a plastoquinone + NADPH + (n+1) H(+)(in) = a plastoquinol + NADP(+) + n H(+)(out). In terms of biological role, NDH-1 shuttles electrons from NAD(P)H, via FMN and iron-sulfur (Fe-S) centers, to quinones in the respiratory chain. The immediate electron acceptor for the enzyme in this species is believed to be plastoquinone. Couples the redox reaction to proton translocation (for every two electrons transferred, four hydrogen ions are translocated across the cytoplasmic membrane), and thus conserves the redox energy in a proton gradient. The protein is NAD(P)H-quinone oxidoreductase chain 4-2 (ndhD2) of Nostoc sp. (strain PCC 7120 / SAG 25.82 / UTEX 2576).